Here is a 110-residue protein sequence, read N- to C-terminus: Protein NATD1 (110 aa).

The 91-residue stretch at 19–109 (EHDRQRRQFS…PLPQYLERLQ (91 aa)) folds into the N-acetyltransferase domain.

Belongs to the NATD1 family. As to expression, expressed in the heart, testis, kidney and lung.

This is Protein NATD1 (Natd1) from Mus musculus (Mouse).